Reading from the N-terminus, the 219-residue chain is Casparian strip membrane protein 3 (219 aa).

Positions M1 to S43 are disordered. The Cytoplasmic portion of the chain corresponds to M1–G57. A helical membrane pass occupies residues I58–I78. The Extracellular segment spans residues L79–L108. Residues F109–V129 form a helical membrane-spanning segment. Over C130–D147 the chain is Cytoplasmic. Residues L148–A168 form a helical membrane-spanning segment. At H169 to E193 the chain is on the extracellular side. An N-linked (GlcNAc...) asparagine glycan is attached at N170. The chain crosses the membrane as a helical span at residues A194 to L214. Over A215 to T219 the chain is Cytoplasmic.

The protein belongs to the Casparian strip membrane proteins (CASP) family. In terms of assembly, homodimer and heterodimers.

It localises to the cell membrane. Functionally, regulates membrane-cell wall junctions and localized cell wall deposition. Required for establishment of the Casparian strip membrane domain (CSD) and the subsequent formation of Casparian strips, a cell wall modification of the root endodermis that determines an apoplastic barrier between the intraorganismal apoplasm and the extraorganismal apoplasm and prevents lateral diffusion. The chain is Casparian strip membrane protein 3 from Lotus japonicus (Lotus corniculatus var. japonicus).